The sequence spans 95 residues: Protein TusB (95 aa).

Belongs to the DsrH/TusB family. Heterohexamer, formed by a dimer of trimers. The hexameric TusBCD complex contains 2 copies each of TusB, TusC and TusD. The TusBCD complex interacts with TusE.

It is found in the cytoplasm. In terms of biological role, part of a sulfur-relay system required for 2-thiolation of 5-methylaminomethyl-2-thiouridine (mnm(5)s(2)U) at tRNA wobble positions. This is Protein TusB from Shigella dysenteriae serotype 1 (strain Sd197).